The primary structure comprises 373 residues: Erythronate-4-phosphate dehydrogenase (373 aa).

2 residues coordinate substrate: S45 and T67. Residues D147, 206 to 208 (ASR), and D232 contribute to the NAD(+) site. Residue R208 is part of the active site. The active site involves E237. H254 (proton donor) is an active-site residue. Position 257 (G257) interacts with NAD(+). Y258 lines the substrate pocket.

Belongs to the D-isomer specific 2-hydroxyacid dehydrogenase family. PdxB subfamily. Homodimer.

The protein resides in the cytoplasm. The enzyme catalyses 4-phospho-D-erythronate + NAD(+) = (R)-3-hydroxy-2-oxo-4-phosphooxybutanoate + NADH + H(+). The protein operates within cofactor biosynthesis; pyridoxine 5'-phosphate biosynthesis; pyridoxine 5'-phosphate from D-erythrose 4-phosphate: step 2/5. In terms of biological role, catalyzes the oxidation of erythronate-4-phosphate to 3-hydroxy-2-oxo-4-phosphonooxybutanoate. The sequence is that of Erythronate-4-phosphate dehydrogenase from Tolumonas auensis (strain DSM 9187 / NBRC 110442 / TA 4).